Reading from the N-terminus, the 345-residue chain is Nuclear hormone receptor family nhr-176 (345 aa).

The segment at residues 7–82 (IQPCLVCGQS…AGMLEKMVFS (76 aa)) is a DNA-binding region (nuclear receptor). The NR C4-type zinc-finger motif lies at 10-30 (CLVCGQSSNSILFGAPSCRAC). The segment at 46–65 (NNCLGECSFAKKSMKPCQSC) adopts an NR C4-type; degenerate zinc-finger fold. The 251-residue stretch at 92-342 (FEKSILEELE…CPLYAISTNS (251 aa)) folds into the NR LBD domain. Residues 331 to 342 (SGCPLYAISTNS) are AF-2.

The protein localises to the nucleus. Its function is as follows. Nuclear hormone receptor. Binds to xenobiotic ligand thiabendazole (TBZ), in vitro. Involved in the up-regulation of phase I detoxification genes, such as probable cytochrome P450 cyp-35d1, in response to TBZ. This chain is Nuclear hormone receptor family nhr-176, found in Caenorhabditis elegans.